A 60-amino-acid polypeptide reads, in one-letter code: Large ribosomal subunit protein uL30 (60 aa).

This sequence belongs to the universal ribosomal protein uL30 family. In terms of assembly, part of the 50S ribosomal subunit.

The protein is Large ribosomal subunit protein uL30 of Streptococcus pneumoniae serotype 2 (strain D39 / NCTC 7466).